We begin with the raw amino-acid sequence, 398 residues long: Riboflavin biosynthesis protein RibBA (398 aa).

A DHBP synthase region spans residues 1–199 (MFHPIEEALD…IKDLIQYRYN (199 aa)). Residues 26–27 (RE), Asp31, 138–142 (RAGHT), and Glu162 contribute to the D-ribulose 5-phosphate site. Glu27 is a binding site for Mg(2+). His141 contributes to the Mg(2+) binding site. A GTP cyclohydrolase II region spans residues 200-398 (LTTLVEREVD…MNKLGHLLHF (199 aa)). 251–255 (RVHSE) contacts GTP. The Zn(2+) site is built by Cys256, Cys267, and Cys269. Residues Gln272, 294–296 (EGR), and Thr316 each bind GTP. Asp328 functions as the Proton acceptor; for GTP cyclohydrolase activity in the catalytic mechanism. Arg330 functions as the Nucleophile; for GTP cyclohydrolase activity in the catalytic mechanism. Residues Thr351 and Lys356 each contribute to the GTP site.

It in the N-terminal section; belongs to the DHBP synthase family. This sequence in the C-terminal section; belongs to the GTP cyclohydrolase II family. Requires Mg(2+) as cofactor. Mn(2+) serves as cofactor. Zn(2+) is required as a cofactor.

It catalyses the reaction D-ribulose 5-phosphate = (2S)-2-hydroxy-3-oxobutyl phosphate + formate + H(+). It carries out the reaction GTP + 4 H2O = 2,5-diamino-6-hydroxy-4-(5-phosphoribosylamino)-pyrimidine + formate + 2 phosphate + 3 H(+). It functions in the pathway cofactor biosynthesis; riboflavin biosynthesis; 2-hydroxy-3-oxobutyl phosphate from D-ribulose 5-phosphate: step 1/1. The protein operates within cofactor biosynthesis; riboflavin biosynthesis; 5-amino-6-(D-ribitylamino)uracil from GTP: step 1/4. Functionally, catalyzes the conversion of D-ribulose 5-phosphate to formate and 3,4-dihydroxy-2-butanone 4-phosphate. Its function is as follows. Catalyzes the conversion of GTP to 2,5-diamino-6-ribosylamino-4(3H)-pyrimidinone 5'-phosphate (DARP), formate and pyrophosphate. The chain is Riboflavin biosynthesis protein RibBA from Bacillus subtilis (strain 168).